The sequence spans 605 residues: MVEGPGCTLNGEKIRARVLPGQAVTGVRGSALRSLQGRALRLAASTVVVSPQAAALNNDSSQNVLSLFNGYVYSGVETLGKELFMYFGPKALRIHFGMKGFIMINPLEYKYKNGASPVLEVQLTKDLICFFDSSVELRNSMESQQRIRMMKELDVCSPEFSFLRAESEVKKQKGRMLGDVLMDQNVLPGVGNIIKNEALFDSGLHPAVKVCQLTDEQIHHLMKMIRDFSILFYRCRKAGLALSKHYKVYKRPNCGQCHCRITVCRFGDNNRMTYFCPHCQKENPQHVDICKLPTRNTIISWTSSRVDHVMDSVARKSEEHWTCVVCTLINKPSSKACDACLTSRPIDSVLKSEENSTVFSHLMKYPCNTFGKPHTEVKINRKTAFGTTTLVLTDFSNKSSTLERKTKQNQILDEEFQNSPPASVCLNDIQHPSKKTTNDITQPSSKVNISPTISSESKLFSPAHKKPKTAQYSSPELKSCNPGYSNSELQINMTDGPRTLNPDSPRCSKHNRLCILRVVGKDGENKGRQFYACPLPREAQCGFFEWADLSFPFCNHGKRSTMKTVLKIGPNNGKNFFVCPLGKEKQCNFFQWAENGPGIKIIPGC.

Val2 serves as the catalytic Schiff-base intermediate with DNA; via amino nitrogen. Residues Asn192 and Arg271 each coordinate DNA. The FPG-type zinc-finger motif lies at 247–281 (KVYKRPNCGQCHCRITVCRFGDNNRMTYFCPHCQK). The RanBP2-type zinc-finger motif lies at 317–346 (SEEHWTCVVCTLINKPSSKACDACLTSRPI). Ser450 is modified (phosphoserine). The segment at 456–477 (ESKLFSPAHKKPKTAQYSSPEL) is disordered. Zn(2+) is bound by residues Cys507, His510, Cys533, Cys541, Cys554, His556, Cys579, and Cys587. 2 consecutive GRF-type zinc fingers follow at residues 507–550 (CSKH…ADLS) and 554–596 (CNHG…AENG).

The protein belongs to the FPG family. In terms of tissue distribution, expressed in keratinocytes and embryonic fibroblasts (at protein level). Also detected in thymus, testis and fetal lung primary fibroblasts.

It localises to the nucleus. It is found in the chromosome. It catalyses the reaction 2'-deoxyribonucleotide-(2'-deoxyribose 5'-phosphate)-2'-deoxyribonucleotide-DNA = a 3'-end 2'-deoxyribonucleotide-(2,3-dehydro-2,3-deoxyribose 5'-phosphate)-DNA + a 5'-end 5'-phospho-2'-deoxyribonucleoside-DNA + H(+). DNA glycosylase which prefers single-stranded DNA (ssDNA), or partially ssDNA structures such as bubble and fork structures, to double-stranded DNA (dsDNA). Mediates interstrand cross-link repair in response to replication stress: acts by mediating DNA glycosylase activity, cleaving one of the two N-glycosyl bonds comprising the interstrand cross-link, which avoids the formation of a double-strand break but generates an abasic site that is bypassed by translesion synthesis polymerases. In vitro, displays strong glycosylase activity towards the hydantoin lesions spiroiminodihydantoin (Sp) and guanidinohydantoin (Gh) in both ssDNA and dsDNA; also recognizes FapyA, FapyG, 5-OHU, 5-OHC, 5-OHMH, Tg and 8-oxoA lesions in ssDNA. No activity on 8-oxoG detected. Also shows weak DNA-(apurinic or apyrimidinic site) lyase activity. In vivo, appears to be the primary enzyme involved in removing Sp and Gh from ssDNA in neonatal tissues. The chain is Endonuclease 8-like 3 (NEIL3) from Homo sapiens (Human).